The primary structure comprises 2464 residues: Nonribosomal peptide synthetase NPS2 (2464 aa).

An adenylation 1 region spans residues 275 to 670 (DDHHPGTSQP…GRIDTQIKLR (396 aa)). Residues 814–888 (TKAEGQLLEI…QIAKALDASS (75 aa)) enclose the Carrier 1 domain. Ser-848 carries the O-(pantetheine 4'-phosphoryl)serine modification. A condensation 1 region spans residues 924–1325 (IYPPFPLQEG…EGLALDLAQG (402 aa)). The 74-residue stretch at 1364 to 1437 (EDLLLRLRKI…RMAASAGKKI (74 aa)) folds into the Carrier 2 domain. Ser-1398 is subject to O-(pantetheine 4'-phosphoryl)serine. The condensation 2 stretch occupies residues 1479-1887 (DVFPVTTLQA…LRVLVDDLDA (409 aa)). Residues 1917 to 1993 (SSWDEKSSTL…DLVMRAGAED (77 aa)) form the Carrier 3 domain. Ser-1954 carries the O-(pantetheine 4'-phosphoryl)serine modification. The segment at 2047–2340 (GGSRYQHVFG…ATQIQDDLRE (294 aa)) is condensation 3.

This sequence belongs to the NRP synthetase family.

The protein operates within siderophore biosynthesis. In terms of biological role, nonribosomal peptide synthetase; part of the siderophore basidioferrin biosynthetic pathway. The biosynthesis of basidioferrin depends on the hydroxylation of ornithine to N(5)-hydroxyornithine, catalyzed by the monooxygenase SMO1. The second step, the acylation of N(5)-hydroxy-L-ornithine is catalyzed by a not yet identified N-acyltransferase. Finally, assembly of basidioferrin is catalyzed by the nonribosomal peptide synthase (NRPS) NPS2 via amide bond formation between three L-AHO molecules to release the linear L-AHO trimer. N-5-acetyl-N-5-hydroxy-L-ornithine (L-AHO) and N-5-cis-anhydromevalonyl-N-5-hydroxy-L-ornithine (L-AMHO) are accepted as the substrates by the NPS2 adenylation (A) domain, but only L-AHO is trimerized. The sequence is that of Nonribosomal peptide synthetase NPS2 from Ceriporiopsis subvermispora (strain B) (White-rot fungus).